Here is a 57-residue protein sequence, read N- to C-terminus: Small hydrophobic protein (57 aa).

Over 1-8 the chain is Virion surface; the sequence is MPANQPPL. The helical transmembrane segment at 9–29 threads the bilayer; the sequence is YLTFLLLILLYLIITLYVWTI. The Intravirion segment spans residues 30–57; it reads LTINHKTAVRYAALYQRSCSRWGFDQSL.

It belongs to the rubulavirus small hydrophobic protein family. Interacts with host TNFRSF1A, RIPK1 and IRAK1; these interactions interfere with host NF-kappa-B activation at the level of receptor complexes. Interacts with host protein UBQLN4.

The protein localises to the virion membrane. Its subcellular location is the host cell membrane. Its function is as follows. Plays a role in the inhibition of the host NF-kappa-B pathway. This inhibition occurs at the receptor level, by preventing the signaling of TNFR1 as well as IL-1R and TLR3. The sequence is that of Small hydrophobic protein (SH) from Homo sapiens (Human).